A 135-amino-acid polypeptide reads, in one-letter code: Small ribosomal subunit protein bS6 (135 aa).

The disordered stretch occupies residues 99-135; the sequence is EKSAMLSHLDRNAHAGQDEERSRSPRRQRENAIERVE.

This sequence belongs to the bacterial ribosomal protein bS6 family.

In terms of biological role, binds together with bS18 to 16S ribosomal RNA. The polypeptide is Small ribosomal subunit protein bS6 (Bartonella tribocorum (strain CIP 105476 / IBS 506)).